The primary structure comprises 596 residues: MILAEMPPLDGGIVIHSGNISQAKQYLGQEHPYAIYDMRAEGDVWLNLDALAIIAGTIQAQGTLYLICPNWDTLEQQLDFDSQRWNGGKVIATPNFYRYFKALVQKFGFQFQTLEETDFSLPKQPPQCQATESLTPQQQKIFEKLPLDSSAIHLITAPRGRGKSTLAGKLAQQLAKTESVLITARSHSVLPSFWKSVAQHIPFFAPDHLLQKIAANQIAAKSWLFIDESASLPLPMLHQFCEYFDKVVLTTTTHNYEGTGRGFSLKFPQQLTKQYREWRLTKPLRWHENDPLEQFIDELLIMSPPSETNQYAEFYHLLAEAHYKTTPSDLRRLFDAQDQLLHSFSEHQRLVGGIWAVPEGDLEPELAEAIWRGERRPQGNLVAQYLCFQGNLLEACQLRSVRISRIAVQPELQKQGIGKRLISDFILQKIQQTRPLVDYVSVSFGLSEPLLHFWQQCGFQLVQITPTKEASSGYHSAMMLYPISAEGQRFVQQATARFERDLALQPFYAELQNMLPIRPLVQLQMDEQDWRNIEGFALAQRSLAASYVSLTRLYRQDPRNHGVLANLWQQFERIQGKKEWLENLRSLLANYLQYTR.

ATP contacts are provided by residues Gln-138, 160 to 169 (GRGKSTLAGK), and Arg-285. The N-acetyltransferase domain maps to 328-481 (SDLRRLFDAQ…SGYHSAMMLY (154 aa)). Residues 406–408 (IAV) and 413–419 (QKQGIGK) each bind acetyl-CoA.

It belongs to the RNA cytidine acetyltransferase family. TmcA subfamily.

The protein localises to the cytoplasm. The enzyme catalyses cytidine(34) in elongator tRNA(Met) + acetyl-CoA + ATP + H2O = N(4)-acetylcytidine(34) in elongator tRNA(Met) + ADP + phosphate + CoA + H(+). Its function is as follows. Catalyzes the formation of N(4)-acetylcytidine (ac(4)C) at the wobble position of tRNA(Met), by using acetyl-CoA as an acetyl donor and ATP (or GTP). The polypeptide is tRNA(Met) cytidine acetyltransferase TmcA (Actinobacillus pleuropneumoniae serotype 5b (strain L20)).